We begin with the raw amino-acid sequence, 174 residues long: RNA pyrophosphohydrolase (174 aa).

Positions 14–167 constitute a Nudix hydrolase domain; the sequence is PYRPCVGLMV…KRKVYEEVVA (154 aa). The short motif at 55–76 is the Nudix box element; the sequence is GGIDKGEEPLEAAIRELYEETG.

It belongs to the Nudix hydrolase family. RppH subfamily. Requires a divalent metal cation as cofactor.

In terms of biological role, accelerates the degradation of transcripts by removing pyrophosphate from the 5'-end of triphosphorylated RNA, leading to a more labile monophosphorylated state that can stimulate subsequent ribonuclease cleavage. The chain is RNA pyrophosphohydrolase from Brucella anthropi (strain ATCC 49188 / DSM 6882 / CCUG 24695 / JCM 21032 / LMG 3331 / NBRC 15819 / NCTC 12168 / Alc 37) (Ochrobactrum anthropi).